The chain runs to 602 residues: UvrABC system protein C (602 aa).

A GIY-YIG domain is found at 15 to 92 (DLPGSYQMKD…IQKYQPYYNI (78 aa)). The 36-residue stretch at 197–232 (GKAKASLTAKMERAAKNLQFERAAEIRDQLHYIEQT) folds into the UVR domain.

It belongs to the UvrC family. In terms of assembly, interacts with UvrB in an incision complex.

The protein resides in the cytoplasm. The UvrABC repair system catalyzes the recognition and processing of DNA lesions. UvrC both incises the 5' and 3' sides of the lesion. The N-terminal half is responsible for the 3' incision and the C-terminal half is responsible for the 5' incision. This chain is UvrABC system protein C, found in Lacticaseibacillus paracasei (strain ATCC 334 / BCRC 17002 / CCUG 31169 / CIP 107868 / KCTC 3260 / NRRL B-441) (Lactobacillus paracasei).